A 151-amino-acid chain; its full sequence is Myosin light polypeptide 6 (151 aa).

The residue at position 2 (Cys-2) is an N-acetylcysteine. Residues 7–42 (DQTAEFKEAFQLFDRTGDGKILYSQCGDVMRALGQN) enclose the EF-hand 1 domain. At Ser-57 the chain carries Phosphoserine. Lys-81 bears the N6-acetyllysine mark. EF-hand domains follow at residues 84 to 119 (GTYEDYVEGLRVFDKEGNGTVMGAEIRHVLVTLGEK) and 119 to 151 (KMTEEEVEMLVAGHEDSNGCINYEELLRMVLNG).

Myosin is a hexamer of 2 heavy chains and 4 light chains. Interacts with SPATA6.

Its function is as follows. Regulatory light chain of myosin. Does not bind calcium. The chain is Myosin light polypeptide 6 (Myl6) from Rattus norvegicus (Rat).